The chain runs to 200 residues: Somatotropin (200 aa).

The first 22 residues, 1-22 (MARVLVVLSVVVASLFFSQGAT), serve as a signal peptide directing secretion. Zn(2+) is bound at residue histidine 38. Cysteine 71 and cysteine 173 are joined by a disulfide. Residue glutamate 182 participates in Zn(2+) binding. Residues cysteine 190 and cysteine 198 are joined by a disulfide bond.

It belongs to the somatotropin/prolactin family.

The protein localises to the secreted. In terms of biological role, growth hormone plays an important role in growth control and is involved in the regulation of several anabolic processes. Implicated as an osmoregulatory substance important for seawater adaptation. This Pangasianodon gigas (Mekong giant catfish) protein is Somatotropin (gh).